The chain runs to 473 residues: Photosystem II CP43 reaction center protein (473 aa).

Residues 1–14 (MKTLYSLRRFYHVE) constitute a propeptide that is removed on maturation. Threonine 15 bears the N-acetylthreonine mark. Threonine 15 bears the Phosphothreonine mark. 5 helical membrane-spanning segments follow: residues 69–93 (LFEV…PHLA), 134–155 (LLGP…KDRN), 178–200 (KALY…RKIT), 255–275 (KPFA…LSYS), and 291–312 (WFNN…ASQA). Glutamate 367 contacts [CaMn4O5] cluster. Residues 447 to 471 (RARAAAAGFEKGIDRDFEPVLSMTP) traverse the membrane as a helical segment.

Belongs to the PsbB/PsbC family. PsbC subfamily. As to quaternary structure, PSII is composed of 1 copy each of membrane proteins PsbA, PsbB, PsbC, PsbD, PsbE, PsbF, PsbH, PsbI, PsbJ, PsbK, PsbL, PsbM, PsbT, PsbX, PsbY, PsbZ, Psb30/Ycf12, at least 3 peripheral proteins of the oxygen-evolving complex and a large number of cofactors. It forms dimeric complexes. Binds multiple chlorophylls and provides some of the ligands for the Ca-4Mn-5O cluster of the oxygen-evolving complex. It may also provide a ligand for a Cl- that is required for oxygen evolution. PSII binds additional chlorophylls, carotenoids and specific lipids. serves as cofactor.

Its subcellular location is the plastid. It localises to the chloroplast thylakoid membrane. One of the components of the core complex of photosystem II (PSII). It binds chlorophyll and helps catalyze the primary light-induced photochemical processes of PSII. PSII is a light-driven water:plastoquinone oxidoreductase, using light energy to abstract electrons from H(2)O, generating O(2) and a proton gradient subsequently used for ATP formation. The polypeptide is Photosystem II CP43 reaction center protein (Capsella bursa-pastoris (Shepherd's purse)).